The chain runs to 313 residues: Adhesin MafA 2/3 (313 aa).

Residues 1–14 (MKTLLLLIPLVLTA) form the signal peptide. Residue Cys-15 is the site of N-palmitoyl cysteine attachment. Cys-15 carries the S-diacylglycerol cysteine lipid modification. The segment covering 282–298 (GDTTAQNRPDFKQNNGK) has biased composition (polar residues). Residues 282-313 (GDTTAQNRPDFKQNNGKNPDVGNEVIRRRKGG) form a disordered region.

The protein belongs to the MafA family.

The protein resides in the cell outer membrane. The chain is Adhesin MafA 2/3 (mafA2) from Neisseria gonorrhoeae (strain ATCC 700825 / FA 1090).